Consider the following 62-residue polypeptide: UPF0434 protein SPO3421 (62 aa).

The protein belongs to the UPF0434 family.

This Ruegeria pomeroyi (strain ATCC 700808 / DSM 15171 / DSS-3) (Silicibacter pomeroyi) protein is UPF0434 protein SPO3421.